The sequence spans 320 residues: tRNA (guanine(10)-N2)-dimethyltransferase (320 aa).

Positions 46–136 (EKFFERLAYT…DDKCYVGLLE (91 aa)) constitute a THUMP domain.

The protein belongs to the methyltransferase superfamily. Trm-G10 family. Monomer.

The protein localises to the cytoplasm. It catalyses the reaction guanosine(10) in tRNA + 2 S-adenosyl-L-methionine = N(2)-dimethylguanosine(10) in tRNA + 2 S-adenosyl-L-homocysteine + 2 H(+). Functionally, catalyzes the adenosylmethionine-dependent methylation of the exocyclic amino group (N(2)) of guanosine at position 10 of various tRNAs. Acts via a two-step process that leads to the formation of either N(2)-monomethyl (m(2)G) or N(2)-dimethylguanosine (m(2)(2)G). The polypeptide is tRNA (guanine(10)-N2)-dimethyltransferase (trmG10) (Archaeoglobus fulgidus (strain ATCC 49558 / DSM 4304 / JCM 9628 / NBRC 100126 / VC-16)).